Consider the following 90-residue polypeptide: Small cell adhesion glycoprotein homolog (90 aa).

The Extracellular portion of the chain corresponds to 1-27; it reads MSILPTTDSVPEEAITKASGDVDGFEK. Residues 28–48 form a helical; Signal-anchor for type III membrane protein membrane-spanning segment; the sequence is AVVGGVIAAVFITLITVVVLI. Over 49 to 90 the chain is Cytoplasmic; it reads TVYLYKHKGSYRTNENLEDVEASKTLQMEDSALTPEKKEYFM.

Belongs to the SMAGP family.

The protein resides in the cell membrane. Its subcellular location is the cytoplasmic vesicle membrane. Its function is as follows. May play a role in epithelial cell-cell contacts. This Xenopus tropicalis (Western clawed frog) protein is Small cell adhesion glycoprotein homolog (smagp).